We begin with the raw amino-acid sequence, 278 residues long: Probable 3-hydroxybutyryl-CoA dehydrogenase (278 aa).

It belongs to the 3-hydroxyacyl-CoA dehydrogenase family.

It carries out the reaction (3S)-3-hydroxybutanoyl-CoA + NADP(+) = acetoacetyl-CoA + NADPH + H(+). The protein operates within lipid metabolism; butanoate metabolism. In Deinococcus radiodurans (strain ATCC 13939 / DSM 20539 / JCM 16871 / CCUG 27074 / LMG 4051 / NBRC 15346 / NCIMB 9279 / VKM B-1422 / R1), this protein is Probable 3-hydroxybutyryl-CoA dehydrogenase (hbd).